The following is a 791-amino-acid chain: Linear element protein rec10 (791 aa).

Disordered regions lie at residues 462-523 (NSVP…AKSN) and 644-672 (LLDG…TLIS). The Nuclear localization signal motif lies at 485–492 (QRRKDGKF). Basic residues predominate over residues 493–503 (AKSTKRKKQKS). Positions 644–657 (LLDGTCSSPPNNEC) are enriched in polar residues.

As to quaternary structure, component of linear elements (LinEs), which are similar to synaptonemal complexes, at least composed of rec27, rec25, rec10 and mug20. Interacts with rec25; the interaction is direct. Interacts with hop1 (via N-terminus); the interaction is direct. Interacts with rec15 (via C-terminus); the interaction is direct.

The protein localises to the nucleus. It localises to the chromosome. Its function is as follows. Organizes linear element components on chromosomes and is thus required for meiotic DNA recombination. This is Linear element protein rec10 from Schizosaccharomyces pombe (strain 972 / ATCC 24843) (Fission yeast).